Consider the following 513-residue polypeptide: Calcium-dependent protein kinase 24 (513 aa).

The disordered stretch occupies residues 1-33 (MQPDPSGSGGDGNANAKAKLAPPPVTAAGGRPV). The 259-residue stretch at 47 to 305 (YRIGKKLGQG…AHEVLCHPWI (259 aa)) folds into the Protein kinase domain. ATP is bound by residues 53 to 61 (LGQGQFGTT) and lysine 76. The active-site Proton acceptor is aspartate 171. The interval 311-341 (APDKPIDSAVLSRLKHFSAMNKLKKMALRVI) is autoinhibitory domain. 4 consecutive EF-hand domains span residues 348-383 (EEIGGLKELFKMIDTDDSGTITFDELKEGLKRVGSE), 384-419 (LTEHEIQALMEAADIDNSGTIDYGEFIAATLHMNKL), 420-455 (EREENLVSAFSFFDKDGSGFITIDELSQACREFGLD), and 458-489 (HLEDMIKDVDQNNDGQIDYSEFTAMMRKGNAG). Ca(2+) is bound by residues aspartate 361, aspartate 363, serine 365, threonine 367, glutamate 372, aspartate 397, aspartate 399, serine 401, threonine 403, glutamate 408, aspartate 433, aspartate 435, serine 437, glutamate 444, aspartate 467, asparagine 469, aspartate 471, glutamine 473, and glutamate 478.

The protein belongs to the protein kinase superfamily. Ser/Thr protein kinase family. CDPK subfamily. As to expression, expressed in roots.

The protein localises to the cytoplasm. It catalyses the reaction L-seryl-[protein] + ATP = O-phospho-L-seryl-[protein] + ADP + H(+). The enzyme catalyses L-threonyl-[protein] + ATP = O-phospho-L-threonyl-[protein] + ADP + H(+). With respect to regulation, activated by calcium. Autophosphorylation may play an important role in the regulation of the kinase activity. Its function is as follows. May play a role in signal transduction pathways that involve calcium as a second messenger. Possesses calcium-dependent protein kinase activity in vitro. This chain is Calcium-dependent protein kinase 24, found in Oryza sativa subsp. japonica (Rice).